We begin with the raw amino-acid sequence, 129 residues long: uncharacterized protein (129 aa).

Residues A103–F125 traverse the membrane as a helical segment.

The protein resides in the membrane. This is an uncharacterized protein from Acanthamoeba polyphaga (Amoeba).